Here is a 152-residue protein sequence, read N- to C-terminus: TOMM20-like protein 1 (152 aa).

Over 1–6 (MPSVRL) the chain is Mitochondrial intermembrane. The chain crosses the membrane as a helical span at residues 7-27 (GVGLLAGLAAGGAVVLLSYCV). Topologically, residues 28–152 (YLDWRRHRDP…STEHLKDDPD (125 aa)) are cytoplasmic.

Belongs to the Tom20 family.

The protein resides in the mitochondrion outer membrane. The protein is TOMM20-like protein 1 (Tomm20l) of Mus musculus (Mouse).